The chain runs to 57 residues: uncharacterized protein (57 aa).

The first 22 residues, 1 to 22 (MNEIIITIIVLILLLFITLSRN), serve as a signal peptide directing secretion. Residues 26–57 (NNQSNNGKKEKLIKCKKEVQQLRQKLDQLTFQ) are a coiled coil.

This is an uncharacterized protein from Acheta domesticus (House cricket).